The sequence spans 478 residues: Noelin-3 (478 aa).

The signal sequence occupies residues 1-23 (MSAPLLKLGAVLSTMAMISNWMS). Asparagine 33, asparagine 95, asparagine 179, asparagine 299, and asparagine 465 each carry an N-linked (GlcNAc...) asparagine glycan. The stretch at 77–217 (CSRDAKSRQL…TRLRDCMKKL (141 aa)) forms a coiled coil. The Olfactomedin-like domain occupies 218–470 (TCGKLMKITG…QVLFNVTLFH (253 aa)). The cysteines at positions 219 and 401 are disulfide-linked.

Peripherally associated with AMPAR complex. AMPAR complex consists of an inner core made of 4 pore-forming GluA/GRIA proteins (GRIA1, GRIA2, GRIA3 and GRIA4) and 4 major auxiliary subunits arranged in a twofold symmetry. One of the two pairs of distinct binding sites is occupied either by CNIH2, CNIH3 or CACNG2, CACNG3. The other harbors CACNG2, CACNG3, CACNG4, CACNG8 or GSG1L. This inner core of AMPAR complex is complemented by outer core constituents binding directly to the GluA/GRIA proteins at sites distinct from the interaction sites of the inner core constituents. Outer core constituents include at least PRRT1, PRRT2, CKAMP44/SHISA9, FRRS1L and NRN1. The proteins of the inner and outer core serve as a platform for other, more peripherally associated AMPAR constituents, including OLFM3. Alone or in combination, these auxiliary subunits control the gating and pharmacology of the AMPAR complex and profoundly impact their biogenesis and protein processing. Homodimer. Interacts with MYOC. Interacts with OLFM2. Expressed in the brain (at protein level). Also expressed in the retina, mainly in the ganglion cell layer and in the amacrine cell subregion of the inner nuclear layer. Expressed at high levels in the epithelial cells of the posterior iris and the ciliary body and, at lower levels, in the trabecular meshwork. Isoform 2 preferentially expressed in retina and brain, while isoform 1 preferentially expressed in the tissues of the eye angle.

The protein localises to the secreted. It localises to the synapse. This Rattus norvegicus (Rat) protein is Noelin-3 (Olfm3).